A 256-amino-acid chain; its full sequence is tRNA-cytidine(32) 2-sulfurtransferase 1 (256 aa).

The PP-loop motif motif lies at 38–43 (SGGKDS). [4Fe-4S] cluster-binding residues include C113, C116, and C204.

Belongs to the TtcA family. As to quaternary structure, homodimer. Mg(2+) is required as a cofactor. Requires [4Fe-4S] cluster as cofactor.

The protein localises to the cytoplasm. It catalyses the reaction cytidine(32) in tRNA + S-sulfanyl-L-cysteinyl-[cysteine desulfurase] + AH2 + ATP = 2-thiocytidine(32) in tRNA + L-cysteinyl-[cysteine desulfurase] + A + AMP + diphosphate + H(+). It functions in the pathway tRNA modification. Its function is as follows. Catalyzes the ATP-dependent 2-thiolation of cytidine in position 32 of tRNA, to form 2-thiocytidine (s(2)C32). The sulfur atoms are provided by the cysteine/cysteine desulfurase (IscS) system. The protein is tRNA-cytidine(32) 2-sulfurtransferase 1 of Francisella philomiragia subsp. philomiragia (strain ATCC 25017 / CCUG 19701 / FSC 153 / O#319-036).